The primary structure comprises 410 residues: Na(+)-translocating NADH-quinone reductase subunit B (410 aa).

3 consecutive transmembrane segments (helical) span residues 56 to 76 (MMILVWLALFPAMFYGMYNVG), 119 to 139 (LFGAIYFLPIYATVFIVGGFW), and 159 to 179 (SILFALIVPPTLPLWQAALGI). Thr-232 carries the post-translational modification FMN phosphoryl threonine. Transmembrane regions (helical) follow at residues 266–286 (GSIGEVSTLALLIGGAFIVFA), 293–313 (IIAGVMIGMIAMSSLFNFIGS), 318–338 (MFAMPWYWHLVVGGFAIGMLF), 347–367 (SFTNVGKWWYGALIGVMCVLI), and 377–397 (GMMLAILFANLFAPIFDYFVA).

The protein belongs to the NqrB/RnfD family. Composed of six subunits; NqrA, NqrB, NqrC, NqrD, NqrE and NqrF. FMN is required as a cofactor.

It is found in the cell inner membrane. It catalyses the reaction a ubiquinone + n Na(+)(in) + NADH + H(+) = a ubiquinol + n Na(+)(out) + NAD(+). NQR complex catalyzes the reduction of ubiquinone-1 to ubiquinol by two successive reactions, coupled with the transport of Na(+) ions from the cytoplasm to the periplasm. NqrA to NqrE are probably involved in the second step, the conversion of ubisemiquinone to ubiquinol. The sequence is that of Na(+)-translocating NADH-quinone reductase subunit B from Neisseria meningitidis serogroup A / serotype 4A (strain DSM 15465 / Z2491).